Consider the following 237-residue polypeptide: Phosphatidylserine decarboxylase proenzyme (237 aa).

Serine 206 functions as the Schiff-base intermediate with substrate; via pyruvic acid in the catalytic mechanism. A Pyruvic acid (Ser); by autocatalysis modification is found at serine 206.

Belongs to the phosphatidylserine decarboxylase family. PSD-A subfamily. In terms of assembly, heterodimer of a large membrane-associated beta subunit and a small pyruvoyl-containing alpha subunit. Pyruvate serves as cofactor. Post-translationally, is synthesized initially as an inactive proenzyme. Formation of the active enzyme involves a self-maturation process in which the active site pyruvoyl group is generated from an internal serine residue via an autocatalytic post-translational modification. Two non-identical subunits are generated from the proenzyme in this reaction, and the pyruvate is formed at the N-terminus of the alpha chain, which is derived from the carboxyl end of the proenzyme. The post-translation cleavage follows an unusual pathway, termed non-hydrolytic serinolysis, in which the side chain hydroxyl group of the serine supplies its oxygen atom to form the C-terminus of the beta chain, while the remainder of the serine residue undergoes an oxidative deamination to produce ammonia and the pyruvoyl prosthetic group on the alpha chain.

The protein resides in the cell membrane. It catalyses the reaction a 1,2-diacyl-sn-glycero-3-phospho-L-serine + H(+) = a 1,2-diacyl-sn-glycero-3-phosphoethanolamine + CO2. It functions in the pathway phospholipid metabolism; phosphatidylethanolamine biosynthesis; phosphatidylethanolamine from CDP-diacylglycerol: step 2/2. Its function is as follows. Catalyzes the formation of phosphatidylethanolamine (PtdEtn) from phosphatidylserine (PtdSer). The sequence is that of Phosphatidylserine decarboxylase proenzyme from Rhodococcus jostii (strain RHA1).